Reading from the N-terminus, the 223-residue chain is Ubiquitin carboxyl-terminal hydrolase isozyme L1 (223 aa).

An N-acetylmethionine modification is found at Met-1. In terms of domain architecture, UCH catalytic spans 2 to 221 (QLKPMEINPE…VRFSAVALCK (220 aa)). The interval 5 to 10 (PMEINP) is interaction with ubiquitin. Cys-90 acts as the Nucleophile in catalysis. Ser-125 is subject to Phosphoserine. His-161 functions as the Proton donor in the catalytic mechanism. Positions 211–216 (EVRFSA) are interaction with ubiquitin. Cys-220 carries S-farnesyl cysteine lipidation. Residues 221-223 (KAA) constitute a propeptide, removed in mature form.

It belongs to the peptidase C12 family. In terms of assembly, monomer. Homodimer. Interacts with COPS5 and SNCA. O-glycosylated.

The protein localises to the cytoplasm. Its subcellular location is the endoplasmic reticulum membrane. The catalysed reaction is Thiol-dependent hydrolysis of ester, thioester, amide, peptide and isopeptide bonds formed by the C-terminal Gly of ubiquitin (a 76-residue protein attached to proteins as an intracellular targeting signal).. In terms of biological role, ubiquitin-protein hydrolase involved both in the processing of ubiquitin precursors and of ubiquitinated proteins. This enzyme is a thiol protease that recognizes and hydrolyzes a peptide bond at the C-terminal glycine of ubiquitin. Also binds to free monoubiquitin and may prevent its degradation in lysosomes. The homodimer may have ATP-independent ubiquitin ligase activity. This is Ubiquitin carboxyl-terminal hydrolase isozyme L1 (UCHL1) from Sus scrofa (Pig).